Consider the following 361-residue polypeptide: Isocitrate dehydrogenase [NAD] subunit 1, mitochondrial (361 aa).

A mitochondrion-targeting transit peptide spans 1 to 12 (MLRQGIAAQKKS). 3 residues coordinate substrate: arginine 110, arginine 141, and aspartate 229. Position 229 (aspartate 229) interacts with Mg(2+).

This sequence belongs to the isocitrate and isopropylmalate dehydrogenases family. As to quaternary structure, octamer of two non-identical subunits IDH1 and IDH2. Requires Mg(2+) as cofactor. The cofactor is Mn(2+).

It is found in the mitochondrion. The catalysed reaction is D-threo-isocitrate + NAD(+) = 2-oxoglutarate + CO2 + NADH. In terms of biological role, performs an essential role in the oxidative function of the citric acid cycle. This Kluyveromyces lactis (strain ATCC 8585 / CBS 2359 / DSM 70799 / NBRC 1267 / NRRL Y-1140 / WM37) (Yeast) protein is Isocitrate dehydrogenase [NAD] subunit 1, mitochondrial (IDH1).